The following is a 123-amino-acid chain: Holo-[acyl-carrier-protein] synthase (123 aa).

2 residues coordinate Mg(2+): aspartate 8 and glutamate 55.

The protein belongs to the P-Pant transferase superfamily. AcpS family. It depends on Mg(2+) as a cofactor.

Its subcellular location is the cytoplasm. It carries out the reaction apo-[ACP] + CoA = holo-[ACP] + adenosine 3',5'-bisphosphate + H(+). Functionally, transfers the 4'-phosphopantetheine moiety from coenzyme A to a Ser of acyl-carrier-protein. The polypeptide is Holo-[acyl-carrier-protein] synthase (Caldicellulosiruptor saccharolyticus (strain ATCC 43494 / DSM 8903 / Tp8T 6331)).